The following is a 264-amino-acid chain: GTP cyclohydrolase FolE2 (264 aa).

Belongs to the GTP cyclohydrolase IV family.

The catalysed reaction is GTP + H2O = 7,8-dihydroneopterin 3'-triphosphate + formate + H(+). Its pathway is cofactor biosynthesis; 7,8-dihydroneopterin triphosphate biosynthesis; 7,8-dihydroneopterin triphosphate from GTP: step 1/1. Converts GTP to 7,8-dihydroneopterin triphosphate. This chain is GTP cyclohydrolase FolE2, found in Nitratidesulfovibrio vulgaris (strain ATCC 29579 / DSM 644 / CCUG 34227 / NCIMB 8303 / VKM B-1760 / Hildenborough) (Desulfovibrio vulgaris).